Reading from the N-terminus, the 468-residue chain is MFDESKFDVNLKLWALRIPRELCKSASRILNGYMLNMPRIKPITEDPTCEKTRLVILSESVKNADLSEIPEEKLNQLKKLSELEVVPHSVTLGYSYWSADHLLKQILPDGLDIPSSFETIGHIAHLNLHDELLPFKDVIAKVIYDKNYPRIKTIVNKVGTISNEFRVPKFEVLAGENGMETEVKQYGARFKLDYGLVYWNSRLEHEHMRLSSLFKPGETVCDMFAGIGPFAIPAAQKGCFVYANDLNPDSVRYLKINAKFNKVDDLICVHNMDARKFFSHLMAVSTCEDNLQSVADNDKTKEAAVSRGGETNSSGEEIRESNASINEPLGANKKPSGTTKTENGVGKDCKSIEGHANKRLRQTLLPIAKPWEHIDHVIMNLPASALQFLDSFSNVIQKKYWKGPLPLIHCYCFIRASETTEFIIAEAETALKFHIEDPVFHKVRDVAPNKAMFCLSFRLPEACLKQEE.

Residues His-207, 245 to 246, and 273 to 274 contribute to the S-adenosyl-L-methionine site; these read DL and DA. The disordered stretch occupies residues 301–348; it reads KEAAVSRGGETNSSGEEIRESNASINEPLGANKKPSGTTKTENGVGKD. A compositionally biased stretch (polar residues) spans 309–325; it reads GETNSSGEEIRESNASI. Asn-380 lines the S-adenosyl-L-methionine pocket.

This sequence belongs to the class I-like SAM-binding methyltransferase superfamily. TRM5/TYW2 family. Monomer.

The protein localises to the mitochondrion matrix. It is found in the nucleus. Its subcellular location is the cytoplasm. The enzyme catalyses guanosine(37) in tRNA + S-adenosyl-L-methionine = N(1)-methylguanosine(37) in tRNA + S-adenosyl-L-homocysteine + H(+). Functionally, specifically methylates the N1 position of guanosine-37 in various cytoplasmic and mitochondrial tRNAs. Methylation is not dependent on the nature of the nucleoside 5' of the target nucleoside. This is the first step in the biosynthesis of wybutosine (yW), a modified base adjacent to the anticodon of tRNAs and required for accurate decoding. This Arabidopsis thaliana (Mouse-ear cress) protein is tRNA (guanine(37)-N(1))-methyltransferase 1.